Here is a 389-residue protein sequence, read N- to C-terminus: Probable nitrate transporter NarT (389 aa).

12 helical membrane-spanning segments follow: residues 14-34, 45-65, 69-89, 97-117, 139-159, 161-181, 211-231, 246-266, 268-288, 294-314, 331-351, and 353-373; these read TLSLVVGFMAWSIIAPLMPFI, ISIILAIPVILGSVLRVPFGY, IVGAKWVFFTSFIVLLFPIFF, GMLMASGFFLGVGGAIFSVGV, GNIGTAVSSFLAPPIAGIIGW, TTVRSYLIIIALFALIMFIFG, WYFITFGAFVAFGIFLPNYLV, GVFIALATFLRPIGGILGDKF, AVKVLMIDFVVMIIGAIILGI, LFTVGCLTISICAGIGNGLIF, IVSMMGGLGGFFPPLVITYVA, and LTGSSHLAFIFLAVFGCIALF.

It belongs to the major facilitator superfamily. Nitrate/nitrite porter (TC 2.A.1.8) family.

The protein resides in the cell membrane. Probably required for nitrate uptake under anoxic conditions. Also possibly involved in excretion of nitrite produced by the dissimilatory reduction of nitrate. This is Probable nitrate transporter NarT (narT) from Staphylococcus aureus (strain bovine RF122 / ET3-1).